A 379-amino-acid polypeptide reads, in one-letter code: Protein COS2 (379 aa).

At 1–72 the chain is on the cytoplasmic side; that stretch reads MKENELKNEK…WKLSNNCIYP (72 aa). Residues 73–93 traverse the membrane as a helical segment; that stretch reads LIVSLLVLFLGPIFVLVICGL. Residues 94–254 are Extracellular-facing; sequence SRKRSLSKQL…FLCCIYVSRG (161 aa). A helical transmembrane segment spans residues 255–275; it reads MCLLLRTLYLGWILFMLVQGF. The Cytoplasmic segment spans residues 276 to 379; that stretch reads QNIRVLIMSM…QLSRSEVLLV (104 aa).

It belongs to the DUP/COS family.

Its subcellular location is the membrane. This is Protein COS2 (COS2) from Saccharomyces cerevisiae (strain ATCC 204508 / S288c) (Baker's yeast).